Consider the following 121-residue polypeptide: Large ribosomal subunit protein eL31 (121 aa).

It belongs to the eukaryotic ribosomal protein eL31 family.

The protein is Large ribosomal subunit protein eL31 (RPL31) of Perilla frutescens (Beefsteak mint).